The primary structure comprises 310 residues: Probable cell division protein WhiA (310 aa).

The segment at residues 277-310 (SLKELAEQVPDGPISKSGVNHRLKKLHEIAENLR) is a DNA-binding region (H-T-H motif).

This sequence belongs to the WhiA family.

In terms of biological role, involved in cell division and chromosome segregation. The polypeptide is Probable cell division protein WhiA (Lactobacillus delbrueckii subsp. bulgaricus (strain ATCC 11842 / DSM 20081 / BCRC 10696 / JCM 1002 / NBRC 13953 / NCIMB 11778 / NCTC 12712 / WDCM 00102 / Lb 14)).